Here is a 219-residue protein sequence, read N- to C-terminus: GTP-binding protein drn-1 (219 aa).

GTP contacts are provided by residues 37-44 (GAGGVGKS), 56-62 (NENYVPT), 85-89 (DTTGS), 146-149 (NKKD), and 177-178 (AK). Residues 59–67 (YVPTIEDTY) carry the Effector region motif. C216 is modified (cysteine methyl ester). C216 carries the S-geranylgeranyl cysteine lipid modification. The propeptide at 217–219 (HIM) is removed in mature form.

The protein belongs to the small GTPase superfamily. Di-Ras family. Interacts with epac-1 (via C-terminus). As to expression, expressed specifically in neurons including the nerve ring, ventral and dorsal nerve cord motor neurons and tail ganglia.

The protein resides in the cell membrane. Its function is as follows. Displays low GTPase activity and exists predominantly in the GTP-bound form. Together with epac-1, may regulate acetylcholine release at the neuromuscular junctions probably downstream of G-protein gsa-1 and adenylate cyclase acy-1. The protein is GTP-binding protein drn-1 of Caenorhabditis elegans.